The primary structure comprises 651 residues: Acetyl-coenzyme A synthetase (651 aa).

Residues 189 to 192 (RGGK), T311, and N335 contribute to the CoA site. ATP contacts are provided by residues 387–389 (GEP), 411–416 (DTWWQT), D500, and R515. S523 is a binding site for CoA. Residue R526 participates in ATP binding. Positions 537, 539, and 542 each coordinate Mg(2+). R586 contributes to the CoA binding site. An N6-acetyllysine modification is found at K611.

It belongs to the ATP-dependent AMP-binding enzyme family. Mg(2+) serves as cofactor. Acetylated. Deacetylation by the SIR2-homolog deacetylase activates the enzyme.

It carries out the reaction acetate + ATP + CoA = acetyl-CoA + AMP + diphosphate. In terms of biological role, catalyzes the conversion of acetate into acetyl-CoA (AcCoA), an essential intermediate at the junction of anabolic and catabolic pathways. AcsA undergoes a two-step reaction. In the first half reaction, AcsA combines acetate with ATP to form acetyl-adenylate (AcAMP) intermediate. In the second half reaction, it can then transfer the acetyl group from AcAMP to the sulfhydryl group of CoA, forming the product AcCoA. This chain is Acetyl-coenzyme A synthetase, found in Brucella melitensis biotype 1 (strain ATCC 23456 / CCUG 17765 / NCTC 10094 / 16M).